Consider the following 264-residue polypeptide: DNA-binding HTH-type transcriptional repressor TrmBL2 (264 aa).

Residues 81 to 113 (LEKFIEEWQERVKEELEAKKKAKEELIELMKPL) adopt a coiled-coil conformation.

It belongs to the transcriptional regulator TrmB family.

It is found in the cytoplasm. The protein localises to the chromosome. In terms of biological role, an abundant chromosomal protein that seems to be involved in both genome architecture and transcription repression. Incubation with DNA in vitro gives fibrous structures 14.2 +/- 2.1 nm in thickness (naked DNA is 1.83 +/- 0.37 nm); does not significantly compact DNA. Binds to both coding and non-coding regions; binding within gene promoters correlates with decreased transcript levels, while binding within coding regions does not. The chain is DNA-binding HTH-type transcriptional repressor TrmBL2 from Thermococcus kodakarensis (strain ATCC BAA-918 / JCM 12380 / KOD1) (Pyrococcus kodakaraensis (strain KOD1)).